A 198-amino-acid chain; its full sequence is Rac-like GTP-binding protein ARAC3 (198 aa).

Residues 13-21 (GDGAVGKTC), 31-38 (FPTDYVPT), 60-64 (DTAGQ), and 118-121 (TKLD) contribute to the GTP site. The short motif at 35-43 (YVPTVFDNF) is the Effector region element. The S-palmitoyl cysteine moiety is linked to residue Cys158. A Cysteine methyl ester modification is found at Cys195. A lipid anchor (S-geranylgeranyl cysteine) is attached at Cys195. Residues 196-198 (SIL) constitute a propeptide, removed in mature form.

The protein belongs to the small GTPase superfamily. Rho family. In terms of assembly, interacts with Rho GDP-dissociation inhibitor 1 and ICR1. Binds to SPK1 when in the inactive GDP-bound form. As to expression, ubiquitous. Preferentially expressed at the tip of root hairs.

It localises to the cytoplasm. Its subcellular location is the cell membrane. Its function is as follows. Inactive GDP-bound Rho GTPases reside in the cytosol, are found in a complex with Rho GDP-dissociation inhibitors (Rho GDIs), and are released from the GDI protein in order to translocate to membranes upon activation. Involved in cell polarity control during the actin-dependent tip growth of root hairs, thus regulating root hair length and root hair initiation. Contributes, in a SPK1-dependent manner, to the prevention of cortical microtubules organization into parallel arrays oriented perpendicular to the axis of cell elongation to limit anisotropic cell growth during petal development. SPK1-dependent activation is required for auxin-mediated inhibition of PIN2 internalization during gravitropic responses. This Arabidopsis thaliana (Mouse-ear cress) protein is Rac-like GTP-binding protein ARAC3.